The following is a 130-amino-acid chain: uncharacterized protein (130 aa).

Met1 carries the N-acetylmethionine modification.

Homotetramer.

This is an uncharacterized protein from Arabidopsis thaliana (Mouse-ear cress).